Reading from the N-terminus, the 578-residue chain is ER degradation-enhancing alpha-mannosidase-like protein 2 (578 aa).

The N-terminal stretch at 1-21 is a signal peptide; the sequence is MPFRLLIPLGLLCALLPQHHG. N90, N112, N289, and N450 each carry an N-linked (GlcNAc...) asparagine glycan. A disordered region spans residues 517–557; that stretch reads KNTVSSGPWEPPARPGTLFSPENHDQARERKPAKQKVPLLS. A compositionally biased stretch (basic and acidic residues) spans 538–548; sequence ENHDQARERKP.

Belongs to the glycosyl hydrolase 47 family. Post-translationally, N-glycosylated. As to expression, expressed ubiquitously in all tissues tested with slightly higher levels detected in small intestine and peripheral blood leukocytes and weakest levels in brain and skeletal muscle.

It is found in the endoplasmic reticulum lumen. Involved in the endoplasmic reticulum-associated degradation (ERAD) pathway that targets misfolded glycoproteins for degradation in an N-glycan-dependent manner. May initiate ERAD by promoting the first mannose trimming step of ERAD substrates, from Man9GlcNAc2 to Man8GlcNAc2. Seems to recognize and bind to exposed hydrophobic regions in target proteins. The protein is ER degradation-enhancing alpha-mannosidase-like protein 2 (EDEM2) of Homo sapiens (Human).